The following is a 184-amino-acid chain: MLASASPARRRLLEQAGIPHQVRVSGVDEDQIQHAEPVELVKLLAQAKAQAVAQRLDPSGDAEITAVLGCDSVLSFEGQVFGKPSGPVEAIERWQRMAGSCGSLLTGHCLIRRRQPEVLACVETLVRFAPLSQAEIEAYVASGEPLQCAGGFALEGRGGLCIDGLDGCYSNVIGLSLPWLRTVL.

The active-site Proton acceptor is D71.

It belongs to the Maf family. Requires a divalent metal cation as cofactor.

It is found in the cytoplasm. The catalysed reaction is a ribonucleoside 5'-triphosphate + H2O = a ribonucleoside 5'-phosphate + diphosphate + H(+). It carries out the reaction a 2'-deoxyribonucleoside 5'-triphosphate + H2O = a 2'-deoxyribonucleoside 5'-phosphate + diphosphate + H(+). In terms of biological role, nucleoside triphosphate pyrophosphatase. May have a dual role in cell division arrest and in preventing the incorporation of modified nucleotides into cellular nucleic acids. This is Nucleoside triphosphate pyrophosphatase from Synechococcus sp. (strain CC9605).